The sequence spans 299 residues: Formamidopyrimidine-DNA glycosylase (299 aa).

Catalysis depends on proline 2, which acts as the Schiff-base intermediate with DNA. Glutamate 3 serves as the catalytic Proton donor. Lysine 58 acts as the Proton donor; for beta-elimination activity in catalysis. Residues histidine 106, arginine 125, and lysine 168 each coordinate DNA. The FPG-type zinc-finger motif lies at 259–295 (RVYDRVGHACPTKGCTGRVGRIVQGGRSTFFCETCQV). The Proton donor; for delta-elimination activity role is filled by arginine 285.

This sequence belongs to the FPG family. As to quaternary structure, monomer. Requires Zn(2+) as cofactor.

The catalysed reaction is Hydrolysis of DNA containing ring-opened 7-methylguanine residues, releasing 2,6-diamino-4-hydroxy-5-(N-methyl)formamidopyrimidine.. It carries out the reaction 2'-deoxyribonucleotide-(2'-deoxyribose 5'-phosphate)-2'-deoxyribonucleotide-DNA = a 3'-end 2'-deoxyribonucleotide-(2,3-dehydro-2,3-deoxyribose 5'-phosphate)-DNA + a 5'-end 5'-phospho-2'-deoxyribonucleoside-DNA + H(+). Its function is as follows. Involved in base excision repair of DNA damaged by oxidation or by mutagenic agents. Acts as a DNA glycosylase that recognizes and removes damaged bases. Has a preference for oxidized purines, such as 7,8-dihydro-8-oxoguanine (8-oxoG). Has AP (apurinic/apyrimidinic) lyase activity and introduces nicks in the DNA strand. Cleaves the DNA backbone by beta-delta elimination to generate a single-strand break at the site of the removed base with both 3'- and 5'-phosphates. This chain is Formamidopyrimidine-DNA glycosylase, found in Methylorubrum extorquens (strain CM4 / NCIMB 13688) (Methylobacterium extorquens).